Reading from the N-terminus, the 381-residue chain is Putative 8-amino-7-oxononanoate synthase (381 aa).

Arg-20 lines the substrate pocket. Residue 99–100 (GY) coordinates pyridoxal 5'-phosphate. His-124 is a binding site for substrate. Pyridoxal 5'-phosphate is bound by residues Ser-172, 197-200 (DDAH), and 228-231 (TMSK). Residue Lys-231 is modified to N6-(pyridoxal phosphate)lysine. Thr-342 contributes to the substrate binding site.

The protein belongs to the class-II pyridoxal-phosphate-dependent aminotransferase family. BioF subfamily. In terms of assembly, homodimer. Requires pyridoxal 5'-phosphate as cofactor.

It catalyses the reaction 6-carboxyhexanoyl-[ACP] + L-alanine + H(+) = (8S)-8-amino-7-oxononanoate + holo-[ACP] + CO2. It participates in cofactor biosynthesis; biotin biosynthesis. Its function is as follows. Catalyzes the decarboxylative condensation of pimeloyl-[acyl-carrier protein] and L-alanine to produce 8-amino-7-oxononanoate (AON), [acyl-carrier protein], and carbon dioxide. This is Putative 8-amino-7-oxononanoate synthase (bioF) from Methanococcus aeolicus (strain ATCC BAA-1280 / DSM 17508 / OCM 812 / Nankai-3).